A 216-amino-acid chain; its full sequence is MAHRVDHEYDYLFKIVLIGDSGVGKSNILSRFTRNEFCLESKSTIGVEFATRTLQVEGKTVKAQIWDTAGQERYRAITSAYYRGAVGALLVYDITKRQTFDNVQRWLRELRDHADSNIVIMMAGNKSDLNHLRAVSEDDGGALSEKEGLSFLETSALEATNIEKAFQTILTEIYHIVSKKALAAQEATAGASVPGQGTTINVADTSGNTKKGCCST.

19–26 provides a ligand contact to GTP; it reads GDSGVGKS. Positions 41–49 match the Effector region motif; the sequence is SKSTIGVEF. Residues 67–71 and 125–128 each bind GTP; these read DTAGQ and NKSD. S-geranylgeranyl cysteine attachment occurs at residues Cys-213 and Cys-214.

The protein belongs to the small GTPase superfamily. Rab family.

The protein resides in the cell membrane. This Lotus japonicus (Lotus corniculatus var. japonicus) protein is Ras-related protein Rab11C (RAB11C).